The sequence spans 230 residues: Large ribosomal subunit protein uL1 (230 aa).

The protein belongs to the universal ribosomal protein uL1 family. Part of the 50S ribosomal subunit.

In terms of biological role, binds directly to 23S rRNA. The L1 stalk is quite mobile in the ribosome, and is involved in E site tRNA release. Its function is as follows. Protein L1 is also a translational repressor protein, it controls the translation of the L11 operon by binding to its mRNA. The polypeptide is Large ribosomal subunit protein uL1 (Leuconostoc citreum (strain KM20)).